Consider the following 127-residue polypeptide: Large ribosomal subunit protein bL12 (127 aa).

Belongs to the bacterial ribosomal protein bL12 family. In terms of assembly, homodimer. Part of the ribosomal stalk of the 50S ribosomal subunit. Forms a multimeric L10(L12)X complex, where L10 forms an elongated spine to which 2 to 4 L12 dimers bind in a sequential fashion. Binds GTP-bound translation factors.

In terms of biological role, forms part of the ribosomal stalk which helps the ribosome interact with GTP-bound translation factors. Is thus essential for accurate translation. The polypeptide is Large ribosomal subunit protein bL12 (Chloroherpeton thalassium (strain ATCC 35110 / GB-78)).